The primary structure comprises 156 residues: Small ribosomal subunit protein uS7 (156 aa).

Belongs to the universal ribosomal protein uS7 family. Part of the 30S ribosomal subunit. Contacts proteins S9 and S11.

Functionally, one of the primary rRNA binding proteins, it binds directly to 16S rRNA where it nucleates assembly of the head domain of the 30S subunit. Is located at the subunit interface close to the decoding center, probably blocks exit of the E-site tRNA. This is Small ribosomal subunit protein uS7 from Deinococcus geothermalis (strain DSM 11300 / CIP 105573 / AG-3a).